A 129-amino-acid polypeptide reads, in one-letter code: Large ribosomal subunit protein bL12 (129 aa).

Positions 95 to 123 are enriched in basic and acidic residues; that stretch reads MVESTPKSIKEGVSKEDAEEAKKSLEDAG. Residues 95–129 are disordered; that stretch reads MVESTPKSIKEGVSKEDAEEAKKSLEDAGGKASLK.

The protein belongs to the bacterial ribosomal protein bL12 family. In terms of assembly, homodimer. Part of the ribosomal stalk of the 50S ribosomal subunit. Forms a multimeric L10(L12)X complex, where L10 forms an elongated spine to which 2 to 4 L12 dimers bind in a sequential fashion. Binds GTP-bound translation factors.

Its function is as follows. Forms part of the ribosomal stalk which helps the ribosome interact with GTP-bound translation factors. Is thus essential for accurate translation. The sequence is that of Large ribosomal subunit protein bL12 from Acaryochloris marina (strain MBIC 11017).